A 270-amino-acid chain; its full sequence is Hydroxyethylthiazole kinase (270 aa).

M46 provides a ligand contact to substrate. The ATP site is built by R120 and T166. A substrate-binding site is contributed by G193.

This sequence belongs to the Thz kinase family. Requires Mg(2+) as cofactor.

It catalyses the reaction 5-(2-hydroxyethyl)-4-methylthiazole + ATP = 4-methyl-5-(2-phosphooxyethyl)-thiazole + ADP + H(+). The protein operates within cofactor biosynthesis; thiamine diphosphate biosynthesis; 4-methyl-5-(2-phosphoethyl)-thiazole from 5-(2-hydroxyethyl)-4-methylthiazole: step 1/1. In terms of biological role, catalyzes the phosphorylation of the hydroxyl group of 4-methyl-5-beta-hydroxyethylthiazole (THZ). The sequence is that of Hydroxyethylthiazole kinase from Herpetosiphon aurantiacus (strain ATCC 23779 / DSM 785 / 114-95).